A 335-amino-acid chain; its full sequence is MNKPMLMLITFATSLLAQTNKASTGLKTDQSFNNSLSESVKLKEIADIYPTNTNFLTGIGIVAGLAGKGDSIKQKDLIIKILEENNIINEIGSNNIESKNIALVNVSLQVKGNTIKGSKHKACVASILDSKDLTNGILLKTNLKNKEGEIIAIASGITQPNNKLKGSGYTIDSVIINENQNINHSYNIILKKGNYTLINRIHKILTSKKINNKIKSDSTIEIEAKNISLLEEIENIKIETNPKILIDKKNGIILASENAKIGTFTFSIEKDNQNIFLSKNNKTTIQVNSMKLNEFILKNSNNLSNKELIQIIQAAQKINKLNGELILEEIDGNQN.

The first 17 residues, 1–17, serve as a signal peptide directing secretion; the sequence is MNKPMLMLITFATSLLA.

This sequence belongs to the FlgI family. In terms of assembly, the basal body constitutes a major portion of the flagellar organelle and consists of four rings (L,P,S, and M) mounted on a central rod.

The protein localises to the periplasm. Its subcellular location is the bacterial flagellum basal body. Functionally, assembles around the rod to form the L-ring and probably protects the motor/basal body from shearing forces during rotation. The chain is Flagellar P-ring protein from Borreliella burgdorferi (strain ZS7) (Borrelia burgdorferi).